Consider the following 799-residue polypeptide: Zinc finger protein 227 (799 aa).

The 72-residue stretch at 23 to 94 folds into the KRAB domain; the sequence is VTFKDVAVVF…ETETQRSSKH (72 aa). 19 consecutive C2H2-type zinc fingers follow at residues 250–272, 269–291, 324–346, 352–374, 380–402, 408–430, 436–458, 464–486, 492–514, 520–542, 548–570, 576–598, 604–626, 632–654, 660–682, 688–710, 716–738, 744–766, and 772–794; these read HPCGECGRGFSYSPRLPLHPNVH, PNVHTGEKCFSQSSHLRTHQRIH, YRCDSCGKGFSSSTGLIIHYRTH, YKCEECGKCFSQSSNFQCHQRVH, YKCEECGKGFGWSVNLRVHQRVH, YKCEECGKGFTQAAHFHIHQRVH, YKCDVCGKGFSHNSPLICHRRVH, YKCEACGKGFTRNTDLHIHFRVH, YKCKECGKGFSQASNLQVHQNVH, FKCETCGKGFSQSSKLQTHQRVH, YRCDVCGKDFSYSSNLKLHQVIH, YKCEECGKGFSWRSNLHAHQRVH, YKCEQCDKSFSQAIDFRVHQRVH, YKCGVCGKGFSQSSGLQSHQRVH, YKCDVCGKGFRYSSQFIYHQRGH, YKCEECGKGFGRSLNLRHHQRVH, HICEECGKAFSLPSNLRVHLGVH, FKCEECGKGFSQSARLEAHQRVH, and YKCDICDKDFRHRSRLTYHQKVH.

This sequence belongs to the krueppel C2H2-type zinc-finger protein family.

The protein localises to the nucleus. In terms of biological role, may be involved in transcriptional regulation. This chain is Zinc finger protein 227 (ZNF227), found in Homo sapiens (Human).